The chain runs to 667 residues: DNA ligase (667 aa).

NAD(+)-binding positions include D30 to D34, S79 to L80, and E112. The N6-AMP-lysine intermediate role is filled by K114. The NAD(+) site is built by R135, E172, K289, and K313. The Zn(2+) site is built by C407, C410, C425, and C431. A BRCT domain is found at V590–A667.

Belongs to the NAD-dependent DNA ligase family. LigA subfamily. Mg(2+) is required as a cofactor. It depends on Mn(2+) as a cofactor.

The enzyme catalyses NAD(+) + (deoxyribonucleotide)n-3'-hydroxyl + 5'-phospho-(deoxyribonucleotide)m = (deoxyribonucleotide)n+m + AMP + beta-nicotinamide D-nucleotide.. DNA ligase that catalyzes the formation of phosphodiester linkages between 5'-phosphoryl and 3'-hydroxyl groups in double-stranded DNA using NAD as a coenzyme and as the energy source for the reaction. It is essential for DNA replication and repair of damaged DNA. This Histophilus somni (strain 2336) (Haemophilus somnus) protein is DNA ligase.